The chain runs to 316 residues: Ribosomal RNA small subunit methyltransferase H (316 aa).

S-adenosyl-L-methionine-binding positions include 35–37 (AGH), Asp-55, Phe-84, Asp-105, and Gln-112.

The protein belongs to the methyltransferase superfamily. RsmH family.

It is found in the cytoplasm. It carries out the reaction cytidine(1402) in 16S rRNA + S-adenosyl-L-methionine = N(4)-methylcytidine(1402) in 16S rRNA + S-adenosyl-L-homocysteine + H(+). Its function is as follows. Specifically methylates the N4 position of cytidine in position 1402 (C1402) of 16S rRNA. This is Ribosomal RNA small subunit methyltransferase H from Streptococcus pneumoniae (strain ATCC 700669 / Spain 23F-1).